The chain runs to 227 residues: Cytochrome c oxidase subunit 2 (227 aa).

Residues 1 to 14 (MAYPFQLGFQDATS) lie on the Mitochondrial intermembrane side of the membrane. A helical membrane pass occupies residues 15–45 (PIMEELLHFHDHTLMIVFLISSLVLYIISSM). The Mitochondrial matrix segment spans residues 46-59 (LTTKLTHTSTMDAQ). Residues 60 to 87 (EVETIWTILPAIILILIALPSLRILYMM) traverse the membrane as a helical segment. Topologically, residues 88–227 (DEINNPSLTV…HFEEWSASML (140 aa)) are mitochondrial intermembrane. The Cu cation site is built by His-161, Cys-196, Glu-198, Cys-200, His-204, and Met-207. Position 198 (Glu-198) interacts with Mg(2+).

It belongs to the cytochrome c oxidase subunit 2 family. As to quaternary structure, component of the cytochrome c oxidase (complex IV, CIV), a multisubunit enzyme composed of 14 subunits. The complex is composed of a catalytic core of 3 subunits MT-CO1, MT-CO2 and MT-CO3, encoded in the mitochondrial DNA, and 11 supernumerary subunits COX4I, COX5A, COX5B, COX6A, COX6B, COX6C, COX7A, COX7B, COX7C, COX8 and NDUFA4, which are encoded in the nuclear genome. The complex exists as a monomer or a dimer and forms supercomplexes (SCs) in the inner mitochondrial membrane with NADH-ubiquinone oxidoreductase (complex I, CI) and ubiquinol-cytochrome c oxidoreductase (cytochrome b-c1 complex, complex III, CIII), resulting in different assemblies (supercomplex SCI(1)III(2)IV(1) and megacomplex MCI(2)III(2)IV(2)). Found in a complex with TMEM177, COA6, COX18, COX20, SCO1 and SCO2. Interacts with TMEM177 in a COX20-dependent manner. Interacts with COX20. Interacts with COX16. Cu cation serves as cofactor.

The protein localises to the mitochondrion inner membrane. The enzyme catalyses 4 Fe(II)-[cytochrome c] + O2 + 8 H(+)(in) = 4 Fe(III)-[cytochrome c] + 2 H2O + 4 H(+)(out). Functionally, component of the cytochrome c oxidase, the last enzyme in the mitochondrial electron transport chain which drives oxidative phosphorylation. The respiratory chain contains 3 multisubunit complexes succinate dehydrogenase (complex II, CII), ubiquinol-cytochrome c oxidoreductase (cytochrome b-c1 complex, complex III, CIII) and cytochrome c oxidase (complex IV, CIV), that cooperate to transfer electrons derived from NADH and succinate to molecular oxygen, creating an electrochemical gradient over the inner membrane that drives transmembrane transport and the ATP synthase. Cytochrome c oxidase is the component of the respiratory chain that catalyzes the reduction of oxygen to water. Electrons originating from reduced cytochrome c in the intermembrane space (IMS) are transferred via the dinuclear copper A center (CU(A)) of subunit 2 and heme A of subunit 1 to the active site in subunit 1, a binuclear center (BNC) formed by heme A3 and copper B (CU(B)). The BNC reduces molecular oxygen to 2 water molecules using 4 electrons from cytochrome c in the IMS and 4 protons from the mitochondrial matrix. The sequence is that of Cytochrome c oxidase subunit 2 (MT-CO2) from Equus caballus (Horse).